The chain runs to 149 residues: MENKRFFIVYYSSKSNNTHRFMLKLNCKCLRLPIEQKDEPDEILESKIPTVNHPFILLTPTYAGGLGKLKGAVPKPVKKFLNNPVNRNNCKAVIASGNTNFNDTYCIAGDIISQKLQIPFLYKFELLGTNSDVENVIKIGNEFWEKNNF.

It belongs to the NrdI family.

In terms of biological role, probably involved in ribonucleotide reductase function. The sequence is that of Protein NrdI from Malacoplasma penetrans (strain HF-2) (Mycoplasma penetrans).